Here is a 481-residue protein sequence, read N- to C-terminus: Amino acid permease 6 (481 aa).

Over 1-36 (MEKKKSMFVEQSFPEHEIGDTNKNFDEDGRDKRTGT) the chain is Cytoplasmic. A run of 2 helical transmembrane segments spans residues 37–57 (WMTG…LSLA) and 58–78 (WAIA…FSFI). At 79–125 (TYFTSTMLADCYRSPDPVTGKRNYTYMEVVRSYLGGRKVQLCGLAQY) the chain is on the cytoplasmic side. Residues 126–146 (GNLIGITIGYTITASISMVAV) form a helical membrane-spanning segment. Residues 147–167 (KRSNCFHKNGHNVKCATSNTP) are Extracellular-facing. Residues 168-188 (FMIIFAIIQIILSQIPNFHNL) traverse the membrane as a helical segment. Over 189 to 190 (SW) the chain is Cytoplasmic. Residues 191-211 (LSILAAVMSFCYASIGVGLSI) form a helical membrane-spanning segment. The Extracellular portion of the chain corresponds to 212 to 242 (AKAAGGGEHVRTTLTGVTVGIDVSGAEKIWR). Residues 243-263 (TFQAIGDIAFAYAYSTVLIEI) form a helical membrane-spanning segment. Residues 264–283 (QDTLKAGPPSENKAMKRASL) are Cytoplasmic-facing. Residues 284-304 (VGVSTTTFFYMLCGCVGYAAF) form a helical membrane-spanning segment. Over 305–321 (GNDAPGNFLTGFGFYEP) the chain is Extracellular. Residues 322–342 (FWLIDFANVCIAVHLIGAYQV) form a helical membrane-spanning segment. Residues 343–385 (FCQPIFQFVESQSAKRWPDNKFITGEYKIHVPCCGDFSINFLR) are Cytoplasmic-facing. A helical membrane pass occupies residues 386–405 (LVWRTSYVVVTAVVAMIFPF). The Extracellular portion of the chain corresponds to 406–408 (FND). The chain crosses the membrane as a helical span at residues 409–427 (FLGLIGAASFWPLTVYFPI). Residues 428 to 447 (EMHIAQKKIPKFSFTWTWLK) lie on the Cytoplasmic side of the membrane. The chain crosses the membrane as a helical span at residues 448 to 468 (ILSWTCFIVSLVAAAGSVQGL). Residues 469 to 481 (IQSLKDFKPFQAP) are Extracellular-facing.

It belongs to the amino acid/polyamine transporter 2 family. Amino acid/auxin permease (AAAP) (TC 2.A.18.2) subfamily. As to expression, expressed in roots and leaves, and at lower levels in stems and flowers. Found in the xylem parenchyma.

It is found in the cell membrane. Its function is as follows. Amino acid-proton symporter. Stereospecific transporter with a broad specificity for tryptophan, proline, and neutral and acidic amino acids. Has an affinity for aspartate in a physiological range. Involved in the uptake of amino acids diffusing out of the xylem tracheids into the xylem parenchyma. The chain is Amino acid permease 6 (AAP6) from Arabidopsis thaliana (Mouse-ear cress).